Reading from the N-terminus, the 854-residue chain is Transcription factor asR3 (854 aa).

The segment at residues 19–45 (CWECRRRKIKCDRNDPCAHCIRHETQC) is a DNA-binding region (zn(2)-C6 fungal-type). Residues 56–156 (TDSDVSRTRP…SLSTNTSPSA (101 aa)) form a disordered region. Composition is skewed to polar residues over residues 78-90 (ASGS…TRPS) and 125-145 (LNPS…SSRG). The span at 146–156 (PSLSTNTSPSA) shows a compositional bias: low complexity.

Its subcellular location is the nucleus. Its function is as follows. Transcription factor; part of the gene cluster that mediates the biosynthesis of xenovulene A, an unusual meroterpenoid that has potent inhibitory effects on the human gamma-aminobutyrate A (GABAA) benzodiazepine receptor. The polypeptide is Transcription factor asR3 (Sarocladium schorii (Acremonium strictum (strain IMI 501407))).